The chain runs to 60 residues: Large ribosomal subunit protein uL30 (60 aa).

It belongs to the universal ribosomal protein uL30 family. In terms of assembly, part of the 50S ribosomal subunit.

This is Large ribosomal subunit protein uL30 from Streptococcus pyogenes serotype M1.